Consider the following 912-residue polypeptide: Rho guanine nucleotide exchange factor 1 (912 aa).

The RGSL domain occupies 41–232; that stretch reads EQNSQFQSLE…GLYMRHLGVR (192 aa). Positions 248–413 are disordered; sequence KVMGNRRSDE…PDTLHSLPKS (166 aa). The segment covering 283–313 has biased composition (basic and acidic residues); sequence DFRHLKAEVDAEKPGATDRKGGVGMPSRDRN. Positions 365 to 381 are enriched in acidic residues; it reads STDEGAETESPEPGDEG. 2 positions are modified to phosphoserine: Ser374 and Ser409. The DH domain occupies 416–605; it reads KRQEVISELL…REILHHVNQA (190 aa). One can recognise a PH domain in the interval 647 to 760; that stretch reads KLVHEGPLTW…WCALITETAG (114 aa). Thr695 is subject to Phosphothreonine. The residue at position 738 (Tyr738) is a Phosphotyrosine; by JAK2. 2 disordered regions span residues 763–802 and 841–865; these read KVPA…PADA and AEED…LSPA. Over residues 777–789 the composition is skewed to low complexity; the sequence is PSSTREPLLSSSE. Position 863 is a phosphoserine (Ser863). The stretch at 865 to 896 forms a coiled coil; that stretch reads ARTQEIQENLLSLEETMKQLEELEEEFCRLRP.

Interacts with RHOA, GNA12 and GNA13. Homooligomerizes through the coiled coil region. May interact with CCPG1. Interacts with CTNNAL1. Post-translationally, phosphorylated by PKCA. Angiotensin-2 induced Tyr-738 phosphorylation is mediated by JAK2. In terms of tissue distribution, ubiquitously expressed.

The protein resides in the cytoplasm. It is found in the membrane. In terms of biological role, seems to play a role in the regulation of RhoA GTPase by guanine nucleotide-binding alpha-12 (GNA12) and alpha-13 (GNA13) subunits. Acts as a GTPase-activating protein (GAP) for GNA12 and GNA13, and as guanine nucleotide exchange factor (GEF) for RhoA GTPase. Activated G alpha 13/GNA13 stimulates the RhoGEF activity through interaction with the RGS-like domain. This GEF activity is inhibited by binding to activated GNA12. Mediates angiotensin-2-induced RhoA activation. In lymphoid follicles, may trigger activation of GNA13 as part of S1PR2-dependent signaling pathway that leads to inhibition of germinal center (GC) B cell growth and migration outside the GC niche. This is Rho guanine nucleotide exchange factor 1 (ARHGEF1) from Homo sapiens (Human).